The sequence spans 373 residues: Thyroid hormone receptor beta (373 aa).

The tract at residues 1-18 is modulating; the sequence is MPSSMSGYIPSYLDKDEL. Cys19, Cys22, Cys36, Cys39, Cys57, Cys63, Cys73, and Cys76 together coordinate Zn(2+). NR C4-type zinc fingers lie at residues 19–39 and 57–81; these read CVVC…CEGC and CKYE…FKKC. Positions 19 to 93 form a DNA-binding region, nuclear receptor; it reads CVVCGDKATG…VGMATDLVLD (75 aa). The region spanning 129-373 is the NR LBD domain; sequence EEWELIQVVT…PPLFLEVFED (245 aa). 3,3',5-triiodo-L-thyronine contacts are provided by Arg194, Asn243, and His347. Positions 194, 243, and 347 each coordinate L-thyroxine.

The protein belongs to the nuclear hormone receptor family. NR1 subfamily.

Its subcellular location is the nucleus. Functionally, nuclear hormone receptor that can act as a repressor or activator of transcription. High affinity receptor for thyroid hormones, including triiodothyronine and thyroxine. This Aquarana catesbeiana (American bullfrog) protein is Thyroid hormone receptor beta (thrb).